A 520-amino-acid chain; its full sequence is MSKFDLSALETFVRTIPQHYKGPGGAVAVLKDGKVVLRHAWGFADLSTRKAMTPETRMPICSVSKQFTCAVLLDSVGEPEVLDDALAAYLDKFAEKRPSVRDLCNNQSGLRDYWALTVLCGADPEGVFLPEQAQSLLRRLKTTHFAPGTHYSYCNGNFRILADLIEQHTGRSLIELLSERIFQPAGMKTAELIPDTALFDECTGYEGDTVRGFLPAVNRIHWMGDAGICASLDDMIAWEQFIDATRDDESGIYRRLSGLQTFSDGAAAPYGLGLKFEETGGKRLTGHGGALRGWRCQRWHCADERLSTIAMFNFEGGASDVAFKLMNIALGVPTSEQVRVAADAVWFGSWLDHETGLVLSLEDAGRGRMKARFGTGPEMMDVVGENEARSSMTAIRRDGDTIHLAREDENLSLTMQRLKGAAKQDIAGHYRSDELEADLLIVDEGGAFYGAFEGFLGKSDMYSLYEAGPDVWLLPVQRSMDAPSPGEWKLVFHRDAKGEITGMTVGCWLARHVDYRRIQE.

Ser62 (nucleophile) is an active-site residue. The active-site Proton donor/acceptor is the Lys65. Residues Gln477–Glu487 are important for specificity. Asp481 contributes to the substrate binding site.

Belongs to the peptidase S12 family. As to quaternary structure, homodimer.

The catalysed reaction is Release of an N-terminal D-amino acid from a peptide, Xaa-|-Yaa-, in which Xaa is preferably D-Ala, D-Ser or D-Thr. D-amino acid amides and methyl esters also are hydrolyzed, as is glycine amide.. Its activity is regulated as follows. Inhibited by beta-lactam compounds such as 6-aminopenicillic acid, 7-aminocephalosporanic acid, benzylpenicillin and ampicillin. Inhibited by p-chloromercuribenzoate. Hydrolyzes N-terminal residues in D-amino acid-containing peptides. The sequence is that of D-aminopeptidase from Brucella anthropi (strain ATCC 49188 / DSM 6882 / CCUG 24695 / JCM 21032 / LMG 3331 / NBRC 15819 / NCTC 12168 / Alc 37) (Ochrobactrum anthropi).